Consider the following 305-residue polypeptide: MIILGIESSHDDTSIAILENKKVLFQLSLSQVKTHEKFGGTIPEIASREHVKNINILLTMLIEKFDLSKLDYIAYTEKPGLIGALQIGFLFASALSISLNKKLIPINHLEAHFFSSEITNEILYPAVGLVVSGGHSLIYYVKNVNSLEIIGETLDDAIGEVFDKISRKLNLGFPGGPIIDRISSEIVGDIKFTIPKTERDLDFSFSGIKTQVINYINNSKNLDINNVASSFQKTTIDYIEEKLKLAIKKHHPQSLVVGGGVSANTELRKRLSTLHANVLFPKKEYTTDNGAMIAITAFLKLNKSS.

H108 and H112 together coordinate Fe cation. Residues 130–134 (VVSGG), D163, G176, D180, and N264 contribute to the substrate site. Residue D288 participates in Fe cation binding.

Belongs to the KAE1 / TsaD family. Requires Fe(2+) as cofactor.

The protein resides in the cytoplasm. It catalyses the reaction L-threonylcarbamoyladenylate + adenosine(37) in tRNA = N(6)-L-threonylcarbamoyladenosine(37) in tRNA + AMP + H(+). Required for the formation of a threonylcarbamoyl group on adenosine at position 37 (t(6)A37) in tRNAs that read codons beginning with adenine. Is involved in the transfer of the threonylcarbamoyl moiety of threonylcarbamoyl-AMP (TC-AMP) to the N6 group of A37, together with TsaE and TsaB. TsaD likely plays a direct catalytic role in this reaction. The chain is tRNA N6-adenosine threonylcarbamoyltransferase from Mycoplasma mobile (strain ATCC 43663 / 163K / NCTC 11711) (Mesomycoplasma mobile).